Consider the following 613-residue polypeptide: Phostensin (613 aa).

Positions 18 to 33 (EEASVRGREKAERERL) are enriched in basic and acidic residues. Disordered stretches follow at residues 18–231 (EEAS…SAYQ) and 266–500 (GEER…AVPG). Phosphoserine is present on residues Ser-54, Ser-125, Ser-133, Ser-175, and Ser-195. Composition is skewed to basic and acidic residues over residues 104-154 (RSEE…ERRL) and 167-191 (LEARDWRQSPGEVGDRSSRLSEAWK). At Thr-199 the chain carries Phosphothreonine. Over residues 199–221 (TPERSLRLAESREQSPRRKEVES) the composition is skewed to basic and acidic residues. Ser-224 is modified (phosphoserine). A compositionally biased stretch (basic and acidic residues) spans 266–282 (GEERQDYSEECGRKEEW). Residues 295-309 (LSETLTREAQGNSSA) show a composition bias toward polar residues. Basic and acidic residues-rich tracts occupy residues 314-327 (AEQRPVEDGERGMK), 340-350 (KAREWTPRDIE), and 357-366 (EPPESAEKLL). Phosphoserine occurs at positions 368 and 432. The span at 424–446 (QPPPPAPLSPPPPAPTAPQPPGD) shows a compositional bias: pro residues. Residue Lys-457 is modified to N6-acetyllysine. Residues 476-499 (PRRSVPPATPATPTSPATVDAAVP) are compositionally biased toward low complexity. 2 positions are modified to phosphoserine: Ser-490 and Ser-530. The disordered stretch occupies residues 552 to 595 (QYPSESSVLEELGPEPEVPSAPNPPAAQPDDEEDEEELLLLQPE). The segment covering 567–578 (PEVPSAPNPPAA) has biased composition (pro residues). The segment covering 580–589 (PDDEEDEEEL) has biased composition (acidic residues).

As to quaternary structure, interacts with Protein phosphatase 1 (PP1). In terms of tissue distribution, isoform 4 is predominantly expressed in leukocytes and spleen.

The protein resides in the cytoplasm. It is found in the cytoskeleton. In terms of biological role, may target protein phosphatase 1 to F-actin cytoskeleton. This chain is Phostensin (PPP1R18), found in Homo sapiens (Human).